Here is a 91-residue protein sequence, read N- to C-terminus: uncharacterized protein (91 aa).

This is an uncharacterized protein from Escherichia coli (Bacteriophage T4).